Consider the following 92-residue polypeptide: Small ribosomal subunit protein uS19 (92 aa).

This sequence belongs to the universal ribosomal protein uS19 family.

Protein S19 forms a complex with S13 that binds strongly to the 16S ribosomal RNA. This Bifidobacterium adolescentis (strain ATCC 15703 / DSM 20083 / NCTC 11814 / E194a) protein is Small ribosomal subunit protein uS19.